The sequence spans 615 residues: DNA mismatch repair protein MutL (615 aa).

Positions 363 to 397 are disordered; sequence FAEPAAREPVAPRYTPAPASGSRPAAPWPNAQPGY. The span at 364–391 shows a compositional bias: low complexity; the sequence is AEPAAREPVAPRYTPAPASGSRPAAPWP.

The protein belongs to the DNA mismatch repair MutL/HexB family.

Functionally, this protein is involved in the repair of mismatches in DNA. It is required for dam-dependent methyl-directed DNA mismatch repair. May act as a 'molecular matchmaker', a protein that promotes the formation of a stable complex between two or more DNA-binding proteins in an ATP-dependent manner without itself being part of a final effector complex. The sequence is that of DNA mismatch repair protein MutL from Escherichia coli (strain K12 / MC4100 / BW2952).